The following is a 339-amino-acid chain: Pyrimidine monooxygenase RutA (339 aa).

Residues 26 to 27, N92, E101, 117 to 118, and S167 contribute to the FMN site; these read IK and RY.

This sequence belongs to the NtaA/SnaA/DszA monooxygenase family. RutA subfamily.

It catalyses the reaction uracil + FMNH2 + NADH + O2 = (Z)-3-ureidoacrylate + FMN + NAD(+) + H2O + H(+). The enzyme catalyses thymine + FMNH2 + NADH + O2 = (Z)-2-methylureidoacrylate + FMN + NAD(+) + H2O + H(+). Its function is as follows. Catalyzes the pyrimidine ring opening between N-3 and C-4 by an unusual flavin hydroperoxide-catalyzed mechanism, adding oxygen atoms in the process to yield ureidoacrylate peracid, that immediately reacts with FMN forming ureidoacrylate and FMN-N(5)-oxide. The FMN-N(5)-oxide reacts spontaneously with NADH to produce FMN. Requires the flavin reductase RutF to regenerate FMN in vivo. In Cronobacter sakazakii (strain ATCC BAA-894) (Enterobacter sakazakii), this protein is Pyrimidine monooxygenase RutA.